A 116-amino-acid polypeptide reads, in one-letter code: Ribonuclease P protein component (116 aa).

This sequence belongs to the RnpA family. As to quaternary structure, consists of a catalytic RNA component (M1 or rnpB) and a protein subunit.

The enzyme catalyses Endonucleolytic cleavage of RNA, removing 5'-extranucleotides from tRNA precursor.. RNaseP catalyzes the removal of the 5'-leader sequence from pre-tRNA to produce the mature 5'-terminus. It can also cleave other RNA substrates such as 4.5S RNA. The protein component plays an auxiliary but essential role in vivo by binding to the 5'-leader sequence and broadening the substrate specificity of the ribozyme. This is Ribonuclease P protein component from Picosynechococcus sp. (strain ATCC 27264 / PCC 7002 / PR-6) (Agmenellum quadruplicatum).